The chain runs to 553 residues: MSSLINHAMSGLNAAQAALNTVSNNINNYNVAGYTRQTTILAQANSTLGAGGWIGNGVYVSGVQREYDAFITNQLRGAQNQSSGLTTRYEQMSKIDNLLADKSSSLSGSLQSFFTSLQTLVSNAEDPAARQALIGKAEGLVNQFKTTDQYLRDQDKQVNIAIGSSVAQINNYAKQIANLNDQISRMTGVGAGASPNDLLDQRDQLVSELNKIVGVEVSVQDGGTYNLTMANGYTLVQGSTARQLAAVPSSADPTRTTVAYVDEAAGNIEIPEKLLNTGSLGGLLTFRSQDLDQTRNTLGQLALAFADAFNAQHTKGYDADGNKGKDFFSIGSPVVYSNSNNADKTVSLTAKVVDSTKVQATDYKIVFDGTDWQVTRTADNTTFTATKDADGKLEIDGLKVTVGTGAQKNDSFLLKPVSNAIVDMNVKVTNEAEIAMASESKLDPDVDTGDSDNRNGQALLDLQNSNVVGGNKTFNDAYATLVSDVGNKTSTLKTSSTTQANVVKQLYKQQQSVSGVNLDEEYGNLQRYQQYYLANAQVLQTANALFDALLNIR.

It belongs to the flagella basal body rod proteins family.

It is found in the secreted. The protein localises to the bacterial flagellum. The protein is Flagellar hook-associated protein 1 (flgK) of Salmonella typhi.